Here is a 466-residue protein sequence, read N- to C-terminus: Adenylosuccinate lyase (466 aa).

Substrate contacts are provided by residues 21–22 (RY), 97–99 (NHD), and 130–131 (TS). Histidine 180 serves as the catalytic Proton donor/acceptor. Residue glutamine 259 participates in substrate binding. Serine 307 functions as the Proton donor/acceptor in the catalytic mechanism. Residues arginine 347, serine 352, and arginine 356 each coordinate substrate.

Belongs to the lyase 1 family. Adenylosuccinate lyase subfamily. Homotetramer. Residues from neighboring subunits contribute catalytic and substrate-binding residues to each active site.

The catalysed reaction is N(6)-(1,2-dicarboxyethyl)-AMP = fumarate + AMP. The enzyme catalyses (2S)-2-[5-amino-1-(5-phospho-beta-D-ribosyl)imidazole-4-carboxamido]succinate = 5-amino-1-(5-phospho-beta-D-ribosyl)imidazole-4-carboxamide + fumarate. The protein operates within purine metabolism; AMP biosynthesis via de novo pathway; AMP from IMP: step 2/2. It participates in purine metabolism; IMP biosynthesis via de novo pathway; 5-amino-1-(5-phospho-D-ribosyl)imidazole-4-carboxamide from 5-amino-1-(5-phospho-D-ribosyl)imidazole-4-carboxylate: step 2/2. This chain is Adenylosuccinate lyase (purB), found in Dictyostelium discoideum (Social amoeba).